Reading from the N-terminus, the 531-residue chain is 2-isopropylmalate synthase (531 aa).

The Pyruvate carboxyltransferase domain maps to 8 to 284 (IIIFDTTLRD…LTNIDTKQIY (277 aa)). Positions 17, 208, 210, and 244 each coordinate Mn(2+). The regulatory domain stretch occupies residues 408 to 531 (RVELVQVSCG…TQDKQTEVTA (124 aa)).

This sequence belongs to the alpha-IPM synthase/homocitrate synthase family. LeuA type 1 subfamily. In terms of assembly, homodimer. The cofactor is Mn(2+).

It is found in the cytoplasm. It carries out the reaction 3-methyl-2-oxobutanoate + acetyl-CoA + H2O = (2S)-2-isopropylmalate + CoA + H(+). It participates in amino-acid biosynthesis; L-leucine biosynthesis; L-leucine from 3-methyl-2-oxobutanoate: step 1/4. Functionally, catalyzes the condensation of the acetyl group of acetyl-CoA with 3-methyl-2-oxobutanoate (2-ketoisovalerate) to form 3-carboxy-3-hydroxy-4-methylpentanoate (2-isopropylmalate). The sequence is that of 2-isopropylmalate synthase from Trichormus variabilis (strain ATCC 29413 / PCC 7937) (Anabaena variabilis).